The chain runs to 72 residues: Cytochrome b-c1 complex subunit 8 (72 aa).

Over 2-41 the chain is Mitochondrial matrix; the sequence is GKQPVKLKAVVYAISPFQQKIMPGLWKDLPGKIHHKVSEN. The chain crosses the membrane as a helical span at residues 42 to 59; that stretch reads WISATLLLGPLVGTYSYV. Residues 60-72 lie on the Mitochondrial intermembrane side of the membrane; it reads QHFLEKEKLEHRY.

The protein belongs to the UQCRQ/QCR8 family. As to quaternary structure, component of the ubiquinol-cytochrome c oxidoreductase (cytochrome b-c1 complex, complex III, CIII), a multisubunit enzyme composed of 3 respiratory subunits cytochrome b, cytochrome c1 and Rieske protein, 2 core protein subunits, and additional low-molecular weight protein subunits. The complex exists as an obligatory dimer and forms supercomplexes (SCs) in the inner mitochondrial membrane with cytochrome c oxidase (complex IV, CIV).

It is found in the mitochondrion inner membrane. Its function is as follows. Component of the ubiquinol-cytochrome c oxidoreductase, a multisubunit transmembrane complex that is part of the mitochondrial electron transport chain which drives oxidative phosphorylation. The respiratory chain contains 3 multisubunit complexes succinate dehydrogenase (complex II, CII), ubiquinol-cytochrome c oxidoreductase (cytochrome b-c1 complex, complex III, CIII) and cytochrome c oxidase (complex IV, CIV), that cooperate to transfer electrons derived from NADH and succinate to molecular oxygen, creating an electrochemical gradient over the inner membrane that drives transmembrane transport and the ATP synthase. The cytochrome b-c1 complex catalyzes electron transfer from ubiquinol to cytochrome c, linking this redox reaction to translocation of protons across the mitochondrial inner membrane, with protons being carried across the membrane as hydrogens on the quinol. In the process called Q cycle, 2 protons are consumed from the matrix, 4 protons are released into the intermembrane space and 2 electrons are passed to cytochrome c. This chain is Cytochrome b-c1 complex subunit 8, found in Solanum tuberosum (Potato).